Reading from the N-terminus, the 418-residue chain is Actin-related protein 3 (418 aa).

Alanine 2 is modified (N-acetylalanine). N6-acetyllysine occurs at positions 240, 244, 251, and 254.

It belongs to the actin family. ARP3 subfamily. In terms of assembly, component of the Arp2/3 complex composed of ACTR2/ARP2, ACTR3/ARP3, ARPC1B/p41-ARC, ARPC2/p34-ARC, ARPC3/p21-ARC, ARPC4/p20-ARC and ARPC5/p16-ARC. Interacts with WHDC1. Interacts weakly with MEFV. Interacts with AVIL.

The protein resides in the cytoplasm. It localises to the cytoskeleton. It is found in the cell projection. Its subcellular location is the nucleus. In terms of biological role, ATP-binding component of the Arp2/3 complex, a multiprotein complex that mediates actin polymerization upon stimulation by nucleation-promoting factor (NPF). The Arp2/3 complex mediates the formation of branched actin networks in the cytoplasm, providing the force for cell motility. Seems to contact the pointed end of the daughter actin filament. In podocytes, required for the formation of lamellipodia downstream of AVIL and PLCE1 regulation. In addition to its role in the cytoplasmic cytoskeleton, the Arp2/3 complex also promotes actin polymerization in the nucleus, thereby regulating gene transcription and repair of damaged DNA. The Arp2/3 complex promotes homologous recombination (HR) repair in response to DNA damage by promoting nuclear actin polymerization, leading to drive motility of double-strand breaks (DSBs). Plays a role in ciliogenesis. This Bos taurus (Bovine) protein is Actin-related protein 3 (ACTR3).